We begin with the raw amino-acid sequence, 416 residues long: Lipoyl synthase, mitochondrial (416 aa).

The transit peptide at 1–33 (MAAPTRSLRRLSSFRTTISPSLTVTAPIGCRSY) directs the protein to the mitochondrion. [4Fe-4S] cluster-binding residues include cysteine 132, cysteine 137, cysteine 143, cysteine 163, cysteine 167, cysteine 170, and serine 378. The 220-residue stretch at 148-367 (DKSSATATIM…RQRALDMGFL (220 aa)) folds into the Radical SAM core domain. Positions 396–416 (GSGTAERTVDQTAATTDEATR) are disordered. Residues 405 to 416 (DQTAATTDEATR) show a composition bias toward polar residues.

The protein belongs to the radical SAM superfamily. Lipoyl synthase family. Requires [4Fe-4S] cluster as cofactor.

Its subcellular location is the mitochondrion. The catalysed reaction is [[Fe-S] cluster scaffold protein carrying a second [4Fe-4S](2+) cluster] + N(6)-octanoyl-L-lysyl-[protein] + 2 oxidized [2Fe-2S]-[ferredoxin] + 2 S-adenosyl-L-methionine + 4 H(+) = [[Fe-S] cluster scaffold protein] + N(6)-[(R)-dihydrolipoyl]-L-lysyl-[protein] + 4 Fe(3+) + 2 hydrogen sulfide + 2 5'-deoxyadenosine + 2 L-methionine + 2 reduced [2Fe-2S]-[ferredoxin]. The protein operates within protein modification; protein lipoylation via endogenous pathway; protein N(6)-(lipoyl)lysine from octanoyl-[acyl-carrier-protein]: step 2/2. In terms of biological role, catalyzes the radical-mediated insertion of two sulfur atoms into the C-6 and C-8 positions of the octanoyl moiety bound to the lipoyl domains of lipoate-dependent enzymes, thereby converting the octanoylated domains into lipoylated derivatives. This chain is Lipoyl synthase, mitochondrial, found in Penicillium rubens (strain ATCC 28089 / DSM 1075 / NRRL 1951 / Wisconsin 54-1255) (Penicillium chrysogenum).